The primary structure comprises 219 residues: UPF0173 metal-dependent hydrolase Mlab_1154 (219 aa).

Belongs to the UPF0173 family.

The protein is UPF0173 metal-dependent hydrolase Mlab_1154 of Methanocorpusculum labreanum (strain ATCC 43576 / DSM 4855 / Z).